A 349-amino-acid polypeptide reads, in one-letter code: uncharacterized protein (349 aa).

The next 10 membrane-spanning stretches (helical) occupy residues 15–35 (VHSP…NPVT), 53–73 (ISFC…MILI), 91–111 (WFLL…LMFS), 120–140 (NVVL…ILLL), 147–167 (LSMV…FWGV), 179–199 (FGLG…TTIL), 218–238 (LLGT…DHFM), 248–268 (WMLI…LAGL), 276–296 (INLA…LILL), and 302–322 (AQYL…IDNL). EamA domains follow at residues 39–164 (IELG…VTVF) and 191–319 (FISA…LSFI).

Belongs to the EamA transporter family.

It localises to the cell membrane. This is an uncharacterized protein from Synechocystis sp. (strain ATCC 27184 / PCC 6803 / Kazusa).